The sequence spans 108 residues: Guanine nucleotide-binding protein subunit gamma (108 aa).

A lipid anchor (S-palmitoyl cysteine) is attached at Cys-104. Position 105 is a cysteine methyl ester (Cys-105). Residue Cys-105 is the site of S-farnesyl cysteine attachment. The propeptide at 106–108 (VIS) is removed in mature form.

This sequence belongs to the G protein gamma family. G proteins are composed of 3 units, alpha, beta and gamma.

The protein resides in the membrane. In Yarrowia lipolytica (strain CLIB 122 / E 150) (Yeast), this protein is Guanine nucleotide-binding protein subunit gamma.